We begin with the raw amino-acid sequence, 413 residues long: Lysosomal phospholipase A and acyltransferase (413 aa).

The N-terminal stretch at 1–33 (MDRHLCICREIQLRSGLLFPFLLLMMLADLALP) is a signal peptide. A substrate-binding site is contributed by D46. C65 and C89 are disulfide-bonded. A glycan (N-linked (GlcNAc...) asparagine) is linked at N99. The active-site Acyl-ester intermediate is S198. A Zn(2+)-binding site is contributed by S198. M199 is a substrate binding site. N-linked (GlcNAc...) asparagine glycans are attached at residues N273 and N289. C355 is a Zn(2+) binding site. Catalysis depends on charge relay system residues D360 and H392. Zn(2+) is bound at residue H392. N398 carries N-linked (GlcNAc...) asparagine glycosylation.

This sequence belongs to the AB hydrolase superfamily. Lipase family. Post-translationally, N-glycosylated. N-glycosylation is important for maturation of the enzyme and normal subcellular location. In terms of tissue distribution, detected in alveolar macrophages (at protein level). Widely expressed. Expressed at highest levels in alveolar macrophages.

The protein resides in the lysosome. The protein localises to the secreted. Its subcellular location is the membrane. It carries out the reaction a 1,2-diacyl-sn-glycero-3-phosphocholine + H2O = a 2-acyl-sn-glycero-3-phosphocholine + a fatty acid + H(+). It catalyses the reaction 1,2-dihexadecanoyl-sn-glycero-3-phosphocholine + H2O = 2-hexadecanoyl-sn-glycero-3-phosphocholine + hexadecanoate + H(+). The enzyme catalyses 1-hexadecanoyl-2-(9Z-octadecenoyl)-sn-glycero-3-phosphocholine + H2O = 2-(9Z-octadecenoyl)-sn-glycero-3-phosphocholine + hexadecanoate + H(+). The catalysed reaction is 1,2-di-(9Z-octadecenoyl)-sn-glycero-3-phosphocholine + H2O = 2-(9Z-octadecenoyl)-sn-glycero-3-phosphocholine + (9Z)-octadecenoate + H(+). It carries out the reaction 1-hexadecanoyl-2-glutaroyl-sn-glycero-3-phosphocholine + H2O = 2-glutaroyl-sn-glycero-3-phosphocholine + hexadecanoate + H(+). It catalyses the reaction 1-hexadecanoyl-2-nonadioyl-sn-glycero-3-phosphocholine + H2O = 2-nonadioyl-sn-glycero-3-phosphocholine + hexadecanoate + H(+). The enzyme catalyses 1-hexadecanoyl-2-(5-oxopentanoyl)-sn-glycero-3-phosphocholine + H2O = 2-(5-oxopentanoyl)-sn-glycero-3-phosphocholine + hexadecanoate + H(+). The catalysed reaction is 1-hexadecanoyl-2-(9-oxononanoyl)-sn-glycero-3-phosphocholine + H2O = 2-(9-oxononanoyl)-sn-glycero-3-phosphocholine + hexadecanoate + H(+). It carries out the reaction a 1,2-diacyl-sn-glycero-3-phosphocholine + H2O = a 1-acyl-sn-glycero-3-phosphocholine + a fatty acid + H(+). It catalyses the reaction 1,2-dihexadecanoyl-sn-glycero-3-phosphocholine + H2O = 1-hexadecanoyl-sn-glycero-3-phosphocholine + hexadecanoate + H(+). The enzyme catalyses 1-hexadecanoyl-2-(9Z-octadecenoyl)-sn-glycero-3-phosphocholine + H2O = 1-hexadecanoyl-sn-glycero-3-phosphocholine + (9Z)-octadecenoate + H(+). The catalysed reaction is 1,2-di-(9Z-octadecenoyl)-sn-glycero-3-phosphocholine + H2O = 1-(9Z-octadecenoyl)-sn-glycero-3-phosphocholine + (9Z)-octadecenoate + H(+). It carries out the reaction a 1-acyl-sn-glycero-3-phosphocholine + H2O = sn-glycerol 3-phosphocholine + a fatty acid + H(+). It catalyses the reaction 1-hexadecanoyl-sn-glycero-3-phosphocholine + H2O = sn-glycerol 3-phosphocholine + hexadecanoate + H(+). The enzyme catalyses N-(acetyl)-sphing-4-enine + a 1,2-diacyl-sn-glycero-3-phosphoethanolamine = 1-O-acyl-N-(acetyl)-sphing-4-enine + a 2-acyl-sn-glycero-3-phosphoethanolamine. The catalysed reaction is 1-hexadecanoyl-2-(9Z-octadecenoyl)-sn-glycero-3-phosphoethanolamine + N-(acetyl)-sphing-4-enine = 2-(9Z-octadecenoyl)-sn-glycero-3-phosphoethanolamine + 1-hexadecanoyl-N-(acetyl)-sphing-4-enine. It carries out the reaction 1-hexadecanoyl-2-(9Z,12Z-octadecadienoyl)-sn-glycero-3-phosphoethanolamine + N-(acetyl)-sphing-4-enine = 2-(9Z,12Z)-octadecadienoyl-sn-glycero-3-phosphoethanolamine + 1-hexadecanoyl-N-(acetyl)-sphing-4-enine. It catalyses the reaction 1-hexadecanoyl-2-(5Z,8Z,11Z,14Z-eicosatetraenoyl)-sn-glycero-3-phosphoethanolamine + N-(acetyl)-sphing-4-enine = 2-(5Z,8Z,11Z,14Z)-eicosatetraenoyl-sn-glycero-3-phosphoethanolamine + 1-hexadecanoyl-N-(acetyl)-sphing-4-enine. The enzyme catalyses N-(acetyl)-sphing-4-enine + a 1,2-diacyl-sn-glycero-3-phosphoethanolamine = 1-O-acyl-N-(acetyl)-sphing-4-enine + a 1-acyl-sn-glycero-3-phosphoethanolamine. The catalysed reaction is 1-hexadecanoyl-2-(9Z-octadecenoyl)-sn-glycero-3-phosphoethanolamine + N-(acetyl)-sphing-4-enine = 1-(9Z-octadecenoyl)-N-(acetyl)-sphing-4-enine + 1-hexadecanoyl-sn-glycero-3-phosphoethanolamine. It carries out the reaction 1-hexadecanoyl-2-(9Z,12Z-octadecadienoyl)-sn-glycero-3-phosphoethanolamine + N-(acetyl)-sphing-4-enine = 1-(9Z,12Z-octadecadienoyl)-N-acetylsphing-4-enine + 1-hexadecanoyl-sn-glycero-3-phosphoethanolamine. It catalyses the reaction 1-hexadecanoyl-2-(5Z,8Z,11Z,14Z-eicosatetraenoyl)-sn-glycero-3-phosphoethanolamine + N-(acetyl)-sphing-4-enine = 1-(5Z,8Z,11Z,14Z)-eicosatetraenoyl-N-(acetyl)-sphing-4-enine + 1-hexadecanoyl-sn-glycero-3-phosphoethanolamine. The enzyme catalyses N-(acetyl)-sphing-4-enine + a 1,2-diacyl-sn-glycero-3-phosphocholine = 1-O-acyl-N-(acetyl)-sphing-4-enine + a 2-acyl-sn-glycero-3-phosphocholine. The catalysed reaction is 1-hexadecanoyl-2-(9Z-octadecenoyl)-sn-glycero-3-phosphocholine + N-(acetyl)-sphing-4-enine = 1-hexadecanoyl-N-(acetyl)-sphing-4-enine + 2-(9Z-octadecenoyl)-sn-glycero-3-phosphocholine. It carries out the reaction 1-hexadecanoyl-2-(9Z,12Z-octadecadienoyl)-sn-glycero-3-phosphocholine + N-(acetyl)-sphing-4-enine = 2-(9Z,12Z-octadecadienoyl)-sn-glycero-3-phosphocholine + 1-hexadecanoyl-N-(acetyl)-sphing-4-enine. It catalyses the reaction 1-hexadecanoyl-2-(5Z,8Z,11Z,14Z-eicosatetraenoyl)-sn-glycero-3-phosphocholine + N-(acetyl)-sphing-4-enine = 1-hexadecanoyl-N-(acetyl)-sphing-4-enine + 2-(5Z,8Z,11Z,14Z)-eicosatetraenoyl-sn-glycero-3-phosphocholine. The enzyme catalyses 1-hexadecanoyl-2-(4Z,7Z,10Z,13Z,16Z,19Z-docosahexaenoyl)-sn-glycero-3-phosphocholine + N-(acetyl)-sphing-4-enine = 2-(4Z,7Z,10Z,13Z,16Z,19Z-docosahexaenoyl)-sn-glycero-3-phosphocholine + 1-hexadecanoyl-N-(acetyl)-sphing-4-enine. The catalysed reaction is 1-hexadecanoyl-2-nonadioyl-sn-glycero-3-phosphocholine + N-(acetyl)-sphing-4-enine = 2-nonadioyl-sn-glycero-3-phosphocholine + 1-hexadecanoyl-N-(acetyl)-sphing-4-enine. It carries out the reaction 1-octadecanoyl-2-(9Z-octadecenoyl)-sn-glycero-3-phosphocholine + N-(acetyl)-sphing-4-enine = 1-octadecanoyl-N-(acetyl)-sphing-4-enine + 2-(9Z-octadecenoyl)-sn-glycero-3-phosphocholine. It catalyses the reaction 1-(9Z)-octadecenoyl-2-octadecanoyl-sn-glycero-3-phosphocholine + N-(acetyl)-sphing-4-enine = 2-octadecanoyl-sn-glycero-3-phosphocholine + 1-(9Z-octadecenoyl)-N-(acetyl)-sphing-4-enine. The enzyme catalyses 1-octadecanoyl-2-(5Z,8Z,11Z,14Z-eicosatetraenoyl)-sn-glycero-3-phosphocholine + N-(acetyl)-sphing-4-enine = 1-octadecanoyl-N-(acetyl)-sphing-4-enine + 2-(5Z,8Z,11Z,14Z)-eicosatetraenoyl-sn-glycero-3-phosphocholine. The catalysed reaction is 1-(9Z-octadecenoyl)-2-hexadecanoyl-sn-glycero-3-phosphocholine + N-(acetyl)-sphing-4-enine = 1-(9Z-octadecenoyl)-N-(acetyl)-sphing-4-enine + 2-hexadecanoyl-sn-glycero-3-phosphocholine. It carries out the reaction N-(acetyl)-sphing-4-enine + a 1,2-diacyl-sn-glycero-3-phosphocholine = 1-O-acyl-N-(acetyl)-sphing-4-enine + a 1-acyl-sn-glycero-3-phosphocholine. It catalyses the reaction 1-hexadecanoyl-2-(9Z-octadecenoyl)-sn-glycero-3-phosphocholine + N-(acetyl)-sphing-4-enine = 1-(9Z-octadecenoyl)-N-(acetyl)-sphing-4-enine + 1-hexadecanoyl-sn-glycero-3-phosphocholine. The enzyme catalyses 1-hexadecanoyl-2-(9Z,12Z-octadecadienoyl)-sn-glycero-3-phosphocholine + N-(acetyl)-sphing-4-enine = 1-(9Z,12Z-octadecadienoyl)-N-acetylsphing-4-enine + 1-hexadecanoyl-sn-glycero-3-phosphocholine. The catalysed reaction is 1-hexadecanoyl-2-(5Z,8Z,11Z,14Z-eicosatetraenoyl)-sn-glycero-3-phosphocholine + N-(acetyl)-sphing-4-enine = 1-(5Z,8Z,11Z,14Z)-eicosatetraenoyl-N-(acetyl)-sphing-4-enine + 1-hexadecanoyl-sn-glycero-3-phosphocholine. It carries out the reaction 1-hexadecanoyl-2-(4Z,7Z,10Z,13Z,16Z,19Z-docosahexaenoyl)-sn-glycero-3-phosphocholine + N-(acetyl)-sphing-4-enine = 1-(4Z,7Z,10Z,13Z,16Z,19Z-docosahexaenoyl)-N-(acetyl)-sphing-4-enine + 1-hexadecanoyl-sn-glycero-3-phosphocholine. It catalyses the reaction 1-octadecanoyl-2-(9Z-octadecenoyl)-sn-glycero-3-phosphocholine + N-(acetyl)-sphing-4-enine = 1-(9Z-octadecenoyl)-N-(acetyl)-sphing-4-enine + 1-octadecanoyl-sn-glycero-3-phosphocholine. The enzyme catalyses 1-octadecanoyl-2-(9Z,12Z)-octadecadienoyl-sn-glycero-3-phosphocholine + N-(acetyl)-sphing-4-enine = 1-(9Z,12Z-octadecadienoyl)-N-acetylsphing-4-enine + 1-octadecanoyl-sn-glycero-3-phosphocholine. The catalysed reaction is 1-(9Z-octadecenoyl)-2-hexadecanoyl-sn-glycero-3-phosphocholine + N-(acetyl)-sphing-4-enine = 1-hexadecanoyl-N-(acetyl)-sphing-4-enine + 1-(9Z-octadecenoyl)-sn-glycero-3-phosphocholine. It carries out the reaction 1-(9Z)-octadecenoyl-2-octadecanoyl-sn-glycero-3-phosphocholine + N-(acetyl)-sphing-4-enine = 1-octadecanoyl-N-(acetyl)-sphing-4-enine + 1-(9Z-octadecenoyl)-sn-glycero-3-phosphocholine. It catalyses the reaction 1,2-di-(9Z-octadecenoyl)-sn-glycero-3-phosphocholine + N-(acetyl)-sphing-4-enine = 1-(9Z-octadecenoyl)-N-(acetyl)-sphing-4-enine + 1-(9Z-octadecenoyl)-sn-glycero-3-phosphocholine. The enzyme catalyses 1-octadecanoyl-2-(5Z,8Z,11Z,14Z-eicosatetraenoyl)-sn-glycero-3-phosphocholine + N-(acetyl)-sphing-4-enine = 1-(5Z,8Z,11Z,14Z)-eicosatetraenoyl-N-(acetyl)-sphing-4-enine + 1-octadecanoyl-sn-glycero-3-phosphocholine. The catalysed reaction is a 1,2-diacyl-sn-glycero-3-phospho-L-serine + N-(acetyl)-sphing-4-enine = a 2-acyl-sn-glycero-3-phospho-L-serine + 1-O-acyl-N-(acetyl)-sphing-4-enine. It carries out the reaction 1-octadecanoyl-2-(9Z-octadecenoyl)-sn-glycero-3-phospho-L-serine + N-(acetyl)-sphing-4-enine = 2-(9Z-octadecenoyl)-sn-glycero-3-phospho-L-serine + 1-octadecanoyl-N-(acetyl)-sphing-4-enine. It catalyses the reaction a 1,2-diacyl-sn-glycero-3-phospho-L-serine + N-(acetyl)-sphing-4-enine = 1-O-acyl-N-(acetyl)-sphing-4-enine + a 1-acyl-sn-glycero-3-phospho-L-serine. The enzyme catalyses 1-octadecanoyl-2-(9Z-octadecenoyl)-sn-glycero-3-phospho-L-serine + N-(acetyl)-sphing-4-enine = 1-octadecanoyl-sn-glycero-3-phosphoserine + 1-(9Z-octadecenoyl)-N-(acetyl)-sphing-4-enine. The catalysed reaction is a 1,2-diacyl-sn-glycero-3-phospho-(1'-sn-glycerol) + N-(acetyl)-sphing-4-enine = 2-acyl-sn-glycero-3-phospho-(1'-sn-glycerol) + 1-O-acyl-N-(acetyl)-sphing-4-enine. It carries out the reaction 1-octadecanoyl-2-(9Z-octadecenoyl)-sn-glycero-3-phospho-(1'-sn-glycerol) + N-(acetyl)-sphing-4-enine = 2-(9Z-octadecenoyl)-sn-glycero-3-phospho-(1'-sn-glycerol) + 1-octadecanoyl-N-(acetyl)-sphing-4-enine. It catalyses the reaction a 1,2-diacyl-sn-glycero-3-phospho-(1'-sn-glycerol) + N-(acetyl)-sphing-4-enine = 1-O-acyl-N-(acetyl)-sphing-4-enine + 1-acyl-sn-glycero-3-phospho-(1'-sn-glycerol). The enzyme catalyses 1-octadecanoyl-2-(9Z-octadecenoyl)-sn-glycero-3-phospho-(1'-sn-glycerol) + N-(acetyl)-sphing-4-enine = 1-octadecanoyl-sn-glycero-3-phospho-(1'-sn-glycerol) + 1-(9Z-octadecenoyl)-N-(acetyl)-sphing-4-enine. The catalysed reaction is an N-acylethanolamine + a 1,2-diacyl-sn-glycero-3-phosphocholine = 2-(acylamino)ethyl fatty acid + a 2-acyl-sn-glycero-3-phosphocholine. It carries out the reaction an N-acylethanolamine + a 1,2-diacyl-sn-glycero-3-phosphocholine = 2-(acylamino)ethyl fatty acid + a 1-acyl-sn-glycero-3-phosphocholine. It catalyses the reaction N-(5Z,8Z,11Z,14Z-eicosatetraenoyl)-ethanolamine + 1,2-di-(9Z-octadecenoyl)-sn-glycero-3-phosphocholine = 2-[(5Z,8Z,11Z,14Z)-eicosatetraenoylamino]ethyl (9Z)-octadecenoate + (9Z-octadecenoyl)-sn-glycero-3-phosphocholine. The enzyme catalyses N-(9Z-octadecenoyl) ethanolamine + 1,2-di-(9Z-octadecenoyl)-sn-glycero-3-phosphocholine = 2-[(9Z)-octadecenoylamino]ethyl (9Z)-octadecenoate + (9Z-octadecenoyl)-sn-glycero-3-phosphocholine. The catalysed reaction is a 3-acyl-sn-glycerol + a 1,2-diacyl-sn-glycero-3-phosphocholine = a 1,3-diacylglycerol + a 1-acyl-sn-glycero-3-phosphocholine. It carries out the reaction a 3-acyl-sn-glycerol + a 1,2-diacyl-sn-glycero-3-phosphocholine = a 1,3-diacylglycerol + a 2-acyl-sn-glycero-3-phosphocholine. It catalyses the reaction 3-(9Z-octadecenoyl)-sn-glycerol + 1,2-di-(9Z-octadecenoyl)-sn-glycero-3-phosphocholine = 1,3-di-(9Z-octadecenoyl)-glycerol + (9Z-octadecenoyl)-sn-glycero-3-phosphocholine. The enzyme catalyses 3-hexadecanoyl-sn-glycerol + 1,2-di-(9Z-octadecenoyl)-sn-glycero-3-phosphocholine = 1-(9Z)-octadecenoyl-3-hexadecanoyl-sn-glycerol + (9Z-octadecenoyl)-sn-glycero-3-phosphocholine. The catalysed reaction is a 1-acyl-sn-glycerol + a 1,2-diacyl-sn-glycero-3-phosphocholine = a 1,3-diacylglycerol + a 2-acyl-sn-glycero-3-phosphocholine. It carries out the reaction a 1-acyl-sn-glycerol + a 1,2-diacyl-sn-glycero-3-phosphocholine = a 1,3-diacylglycerol + a 1-acyl-sn-glycero-3-phosphocholine. It catalyses the reaction 1-(9Z-octadecenoyl)-sn-glycerol + 1,2-di-(9Z-octadecenoyl)-sn-glycero-3-phosphocholine = 1,3-di-(9Z-octadecenoyl)-glycerol + (9Z-octadecenoyl)-sn-glycero-3-phosphocholine. The enzyme catalyses 1-hexadecanoyl-sn-glycerol + 1,2-di-(9Z-octadecenoyl)-sn-glycero-3-phosphocholine = 1-hexadecanoyl-3-(9Z)-octadecenoyl-sn-glycerol + (9Z-octadecenoyl)-sn-glycero-3-phosphocholine. The catalysed reaction is a 2-acylglycerol + a 1,2-diacyl-sn-glycero-3-phosphocholine = a 1,2-diacylglycerol + a 2-acyl-sn-glycero-3-phosphocholine. It carries out the reaction a 2-acylglycerol + a 1,2-diacyl-sn-glycero-3-phosphocholine = a 1,2-diacylglycerol + a 1-acyl-sn-glycero-3-phosphocholine. It catalyses the reaction 2-hexadecanoylglycerol + 1,2-di-(9Z-octadecenoyl)-sn-glycero-3-phosphocholine = 1-(9Z)-octadecenoyl-2-hexadecanoylglycerol + (9Z-octadecenoyl)-sn-glycero-3-phosphocholine. The enzyme catalyses 1-O-alkylglycerol + a 1,2-diacyl-sn-glycero-3-phosphocholine = 1-O-alkyl-3-acylglycerol + a 1-acyl-sn-glycero-3-phosphocholine. The catalysed reaction is 1-O-alkylglycerol + a 1,2-diacyl-sn-glycero-3-phosphocholine = 1-O-alkyl-3-acylglycerol + a 2-acyl-sn-glycero-3-phosphocholine. It carries out the reaction 1-O-hexadecylglycerol + 1,2-di-(9Z-octadecenoyl)-sn-glycero-3-phosphocholine = 1-O-hexadecyl-3-(9Z)-octadecenoylglycerol + (9Z-octadecenoyl)-sn-glycero-3-phosphocholine. It catalyses the reaction 1-O-alkyl-2-acyl-sn-glycerol + a 1,2-diacyl-sn-glycero-3-phosphocholine = 1-O-alkyl-2,3-diacyl-sn-glycerol + a 2-acyl-sn-glycero-3-phosphocholine. The enzyme catalyses 1-O-alkyl-2-acyl-sn-glycerol + a 1,2-diacyl-sn-glycero-3-phosphocholine = 1-O-alkyl-2,3-diacyl-sn-glycerol + a 1-acyl-sn-glycero-3-phosphocholine. The catalysed reaction is 1-O-hexadecyl-2-acetyl-sn-glycerol + 1,2-di-(9Z-octadecenoyl)-sn-glycero-3-phosphocholine = 1-O-hexadecyl-2-acetyl-3-(9Z)-octadecenoyl-sn-glycerol + (9Z-octadecenoyl)-sn-glycero-3-phosphocholine. It carries out the reaction 1-O-hexadecyl-2-O-methyl-sn-glycerol + 1,2-di-(9Z-octadecenoyl)-sn-glycero-3-phosphocholine = 1-O-hexadecyl-2-O-methyl-3-(9Z)-octadecenoyl-sn-glycerol + (9Z-octadecenoyl)-sn-glycero-3-phosphocholine. It catalyses the reaction a 1,2-diacyl-sn-glycero-3-phosphoethanolamine + H2O = a 1-acyl-sn-glycero-3-phosphoethanolamine + a fatty acid + H(+). The enzyme catalyses 1-acyl-2-(5Z,8Z,11Z,14Z)-eicosatetraenoyl-sn-glycero-3-phosphoethanolamine + H2O = a 1-acyl-sn-glycero-3-phosphoethanolamine + (5Z,8Z,11Z,14Z)-eicosatetraenoate + H(+). The catalysed reaction is a 1,2-diacyl-sn-glycero-3-phospho-(1'-sn-glycerol) + H2O = 1-acyl-sn-glycero-3-phospho-(1'-sn-glycerol) + a fatty acid + H(+). It carries out the reaction 1-hexadecanoyl-2-(9Z-octadecenoyl)-sn-glycero-3-phospho-(1'-sn-glycerol) + H2O = 1-hexadecanoyl-sn-glycero-3-phospho-(1'-sn-glycerol) + (9Z)-octadecenoate + H(+). It catalyses the reaction a 1,2-diacyl-sn-glycero-3-phospho-(1'-sn-glycerol) + H2O = 2-acyl-sn-glycero-3-phospho-(1'-sn-glycerol) + a fatty acid + H(+). The enzyme catalyses 1-hexadecanoyl-2-(9Z-octadecenoyl)-sn-glycero-3-phospho-(1'-sn-glycerol) + H2O = 2-(9Z-octadecenoyl)-sn-glycero-3-phospho-(1'-sn-glycerol) + hexadecanoate + H(+). With respect to regulation, transacylase activity is inhibited by MJ33. Its function is as follows. Has dual calcium-independent phospholipase and O-acyltransferase activities with a potential role in glycerophospholipid homeostasis and remodeling of acyl groups of lipophilic alcohols present in acidic cellular compartments. Catalyzes hydrolysis of the ester bond of the fatty acyl group attached at sn-1 or sn-2 position of phospholipids (phospholipase A1 or A2 activity) and transfer it to the hydroxyl group at the first carbon of lipophilic alcohols (O-acyltransferase activity). Among preferred fatty acyl donors are phosphatidylcholines, phosphatidylethanolamines, phosphatidylglycerols and phosphatidylserines. Favors sn-2 over sn-1 deacylation of unsaturated fatty acyl groups of phosphatidylcholines, phosphatidylethanolamines, and phosphatidylglycerols. Among preferred fatty acyl acceptors are natural lipophilic alcohols including short-chain ceramide N-acetyl-sphingosine (C2 ceramide), alkylacylglycerols, monoacylglycerols, and acylethanolamides such as anandamide and oleoylethanolamide. Selectively hydrolyzes the sn-1 fatty acyl group of truncated oxidized phospholipids and may play a role in detoxification of reactive oxidized phospholipids during oxidative stress. Required for normal phospholipid degradation in alveolar macrophages with potential implications in the clearance of pulmonary surfactant, which is mainly composed of dipalmitoylphosphatidylcholine (1,2-dihexadecanoyl-sn-glycero-3-phosphocholine). Involved in the first step of bis(monoacylglycero)phosphate (BMP) de novo synthesis from phosphatidylglycerol (1,2-diacyl-sn-glycero-3-phospho-(1'-sn-glycerol), PG). BMP is an important player in cargo sorting and degradation, regulation of cellular cholesterol levels and intercellular communication. At neutral pH, hydrolyzes the sn-1 fatty acyl group of the lysophosphatidylcholines. This chain is Lysosomal phospholipase A and acyltransferase (Pla2g15), found in Rattus norvegicus (Rat).